The following is a 978-amino-acid chain: Macrophage colony-stimulating factor 1 receptor (978 aa).

The first 19 residues, 1–19 (MELGPPLVLLLATVWHGQG), serve as a signal peptide directing secretion. Topologically, residues 20–515 (APVIEPSGPE…QLPDESLFTP (496 aa)) are extracellular. 5 consecutive Ig-like C2-type domains span residues 24 to 104 (EPSG…VKDP), 107 to 197 (SWNL…KVNR), 204 to 298 (QIKL…VVES), 299 to 397 (AYLN…LTLR), and 398 to 503 (YPPE…SLGQ). Cystine bridges form between cysteine 42-cysteine 84, cysteine 127-cysteine 177, and cysteine 224-cysteine 278. Residues asparagine 45 and asparagine 73 are each glycosylated (N-linked (GlcNAc...) asparagine). N-linked (GlcNAc...) asparagine glycosylation is found at asparagine 302, asparagine 335, asparagine 389, asparagine 410, asparagine 449, asparagine 478, and asparagine 491. Cysteine 417 and cysteine 483 are disulfide-bonded. A helical transmembrane segment spans residues 516–536 (VVVACMSVMSLLVLLLLLLLY). The Cytoplasmic portion of the chain corresponds to 537–978 (KYKQKPKYQV…LQPNNYQFAC (442 aa)). Residues 540–572 (QKPKYQVRWKIIERYEGNSYTFIDPTQLPYNEK) form a regulatory juxtamembrane domain region. Residues tyrosine 544 and tyrosine 559 each carry the phosphotyrosine; by autocatalysis modification. Residues 580 to 914 (LQFGKTLGAG…CFLLQEQARL (335 aa)) enclose the Protein kinase domain. ATP is bound by residues 586-594 (LGAGAFGKV) and lysine 614. Tyrosine 697 and tyrosine 706 each carry phosphotyrosine; by autocatalysis. Serine 711 bears the Phosphoserine mark. Phosphotyrosine; by autocatalysis is present on tyrosine 721. Catalysis depends on aspartate 776, which acts as the Proton acceptor. An activation loop region spans residues 794–816 (DFGLARDIMNDSNYVVKGNARLP). Phosphotyrosine; by autocatalysis is present on residues tyrosine 807 and tyrosine 921. The disordered stretch occupies residues 921 to 957 (YANLPSSGGSSGSDSGGGSSGGSSSEPEEESSSEHLA). A compositionally biased stretch (gly residues) spans 929-941 (GSSGSDSGGGSSG). A Phosphotyrosine; by autocatalysis modification is found at tyrosine 974.

This sequence belongs to the protein kinase superfamily. Tyr protein kinase family. CSF-1/PDGF receptor subfamily. Monomer. Homodimer. Interacts with CSF1 and IL34. Interaction with dimeric CSF1 or IL34 leads to receptor homodimerization. Interacts with INPPL1/SHIP2 and THOC5. Interacts (tyrosine phosphorylated) with PLCG2 (via SH2 domain). Interacts (tyrosine phosphorylated) with PIK3R1 (via SH2 domain). Interacts (tyrosine phosphorylated) with FYN, YES1 and SRC (via SH2 domain). Interacts (tyrosine phosphorylated) with CBL, GRB2 and SLA2. Autophosphorylated in response to CSF1 or IL34 binding. Phosphorylation at Tyr-559 is important for normal down-regulation of signaling by ubiquitination, internalization and degradation. Phosphorylation at Tyr-559 and Tyr-807 is important for interaction with SRC family members, including FYN, YES1 and SRC, and for subsequent activation of these protein kinases. Phosphorylation at Tyr-697 and Tyr-921 is important for interaction with GRB2. Phosphorylation at Tyr-721 is important for interaction with PIK3R1. Phosphorylation at Tyr-721 and Tyr-807 is important for interaction with PLCG2. Phosphorylation at Tyr-974 is important for interaction with CBL. Dephosphorylation by PTPN2 negatively regulates downstream signaling and macrophage differentiation. In terms of processing, ubiquitinated. Becomes rapidly polyubiquitinated after autophosphorylation, leading to its degradation.

It localises to the cell membrane. It catalyses the reaction L-tyrosyl-[protein] + ATP = O-phospho-L-tyrosyl-[protein] + ADP + H(+). With respect to regulation, present in an inactive conformation in the absence of bound ligand. CSF1 or IL34 binding leads to dimerization and activation by autophosphorylation on tyrosine residues. Tyrosine-protein kinase that acts as a cell-surface receptor for CSF1 and IL34 and plays an essential role in the regulation of survival, proliferation and differentiation of hematopoietic precursor cells, especially mononuclear phagocytes, such as macrophages and monocytes. Promotes the release of pro-inflammatory chemokines in response to IL34 and CSF1, and thereby plays an important role in innate immunity and in inflammatory processes. Plays an important role in the regulation of osteoclast proliferation and differentiation, the regulation of bone resorption, and is required for normal bone and tooth development. Required for normal male and female fertility, and for normal development of milk ducts and acinar structures in the mammary gland during pregnancy. Promotes reorganization of the actin cytoskeleton, regulates formation of membrane ruffles, cell adhesion and cell migration, and promotes cancer cell invasion. Activates several signaling pathways in response to ligand binding, including the ERK1/2 and the JNK pathway. Phosphorylates PIK3R1, PLCG2, GRB2, SLA2 and CBL. Activation of PLCG2 leads to the production of the cellular signaling molecules diacylglycerol and inositol 1,4,5-trisphosphate, that then lead to the activation of protein kinase C family members, especially PRKCD. Phosphorylation of PIK3R1, the regulatory subunit of phosphatidylinositol 3-kinase, leads to activation of the AKT1 signaling pathway. Activated CSF1R also mediates activation of the MAP kinases MAPK1/ERK2 and/or MAPK3/ERK1, and of the SRC family kinases SRC, FYN and YES1. Activated CSF1R transmits signals both via proteins that directly interact with phosphorylated tyrosine residues in its intracellular domain, or via adapter proteins, such as GRB2. Promotes activation of STAT family members STAT3, STAT5A and/or STAT5B. Promotes tyrosine phosphorylation of SHC1 and INPP5D/SHIP-1. Receptor signaling is down-regulated by protein phosphatases, such as INPP5D/SHIP-1, that dephosphorylate the receptor and its downstream effectors, and by rapid internalization of the activated receptor. In the central nervous system, may play a role in the development of microglia macrophages. The sequence is that of Macrophage colony-stimulating factor 1 receptor (Csf1r) from Rattus norvegicus (Rat).